The chain runs to 119 residues: Class I hydrophobin 2 (119 aa).

The N-terminal stretch at 1–22 (MFARISTIITTLFFAMLAAATA) is a signal peptide. 4 disulfide bridges follow: Cys36–Cys97, Cys45–Cys91, Cys46–Cys79, and Cys98–Cys112.

The protein belongs to the fungal hydrophobin family. As to quaternary structure, self-assembles to form functional amyloid fibrils called rodlets. Self-assembly into fibrillar rodlets occurs spontaneously at hydrophobic:hydrophilic interfaces and the rodlets further associate laterally to form amphipathic monolayers.

The protein localises to the secreted. It localises to the cell wall. Aerial growth, conidiation, and dispersal of filamentous fungi in the environment rely upon a capability of their secreting small amphipathic proteins called hydrophobins (HPBs) with low sequence identity. Class I can self-assemble into an outermost layer of rodlet bundles on aerial cell surfaces, conferring cellular hydrophobicity that supports fungal growth, development and dispersal; whereas Class II form highly ordered films at water-air interfaces through intermolecular interactions but contribute nothing to the rodlet structure. Abh2 is a class I hydrophobin involved in the emergence of aerial hyphae and strands. The chain is Class I hydrophobin 2 from Agaricus bisporus (White button mushroom).